The chain runs to 359 residues: Dual-specificity RNA methyltransferase RlmN 1 (359 aa).

E96 (proton acceptor) is an active-site residue. Positions 102 to 335 (FKGRATVCIS…STVRQRRGID (234 aa)) constitute a Radical SAM core domain. Cysteines 109 and 340 form a disulfide. [4Fe-4S] cluster contacts are provided by C116, C120, and C123. S-adenosyl-L-methionine is bound by residues 166–167 (GE), S198, 221–223 (SLH), and N297. C340 serves as the catalytic S-methylcysteine intermediate.

The protein belongs to the radical SAM superfamily. RlmN family. It depends on [4Fe-4S] cluster as a cofactor.

The protein resides in the cytoplasm. The enzyme catalyses adenosine(2503) in 23S rRNA + 2 reduced [2Fe-2S]-[ferredoxin] + 2 S-adenosyl-L-methionine = 2-methyladenosine(2503) in 23S rRNA + 5'-deoxyadenosine + L-methionine + 2 oxidized [2Fe-2S]-[ferredoxin] + S-adenosyl-L-homocysteine. It carries out the reaction adenosine(37) in tRNA + 2 reduced [2Fe-2S]-[ferredoxin] + 2 S-adenosyl-L-methionine = 2-methyladenosine(37) in tRNA + 5'-deoxyadenosine + L-methionine + 2 oxidized [2Fe-2S]-[ferredoxin] + S-adenosyl-L-homocysteine. Its function is as follows. Specifically methylates position 2 of adenine 2503 in 23S rRNA and position 2 of adenine 37 in tRNAs. m2A2503 modification seems to play a crucial role in the proofreading step occurring at the peptidyl transferase center and thus would serve to optimize ribosomal fidelity. This is Dual-specificity RNA methyltransferase RlmN 1 from Myxococcus xanthus (strain DK1622).